The chain runs to 66 residues: Protein KleD (66 aa).

The H-T-H motif DNA-binding region spans 33-52; it reads VAVRSGNEWQQVTKWVEPAR.

In Escherichia coli, this protein is Protein KleD (kleD).